The following is a 216-amino-acid chain: Thymidylate kinase (216 aa).

10 to 17 is an ATP binding site; sequence GPDGAGKS.

This sequence belongs to the thymidylate kinase family.

It carries out the reaction dTMP + ATP = dTDP + ADP. Functionally, phosphorylation of dTMP to form dTDP in both de novo and salvage pathways of dTTP synthesis. The polypeptide is Thymidylate kinase (Lactobacillus acidophilus (strain ATCC 700396 / NCK56 / N2 / NCFM)).